Here is a 793-residue protein sequence, read N- to C-terminus: DNA mismatch repair protein MutS (793 aa).

Residue 589 to 596 (GPNMSGKS) coordinates ATP.

Belongs to the DNA mismatch repair MutS family.

Its function is as follows. This protein is involved in the repair of mismatches in DNA. It is possible that it carries out the mismatch recognition step. This protein has a weak ATPase activity. The polypeptide is DNA mismatch repair protein MutS (Thermotoga petrophila (strain ATCC BAA-488 / DSM 13995 / JCM 10881 / RKU-1)).